A 90-amino-acid chain; its full sequence is RNA-binding protein Hfq (90 aa).

In terms of domain architecture, Sm spans 9 to 68 (DPFLNALRRERVPVSIYLVNGIKLQGQVESFDQFVILLKNTVSQMVYKHAISTVVPARPF).

Belongs to the Hfq family. In terms of assembly, homohexamer.

Its function is as follows. RNA chaperone that binds small regulatory RNA (sRNAs) and mRNAs to facilitate mRNA translational regulation in response to envelope stress, environmental stress and changes in metabolite concentrations. Also binds with high specificity to tRNAs. In Shewanella baltica (strain OS155 / ATCC BAA-1091), this protein is RNA-binding protein Hfq.